Reading from the N-terminus, the 608-residue chain is Dextranase (608 aa).

The N-terminal stretch at 1–19 is a signal peptide; that stretch reads MATMLKLLALTLAISESAI. The propeptide occupies 20–34; sequence GAVMHPPGNSHPGTH. N39, N571, and N574 each carry an N-linked (GlcNAc...) asparagine glycan.

This sequence belongs to the glycosyl hydrolase 49 family. In terms of processing, N-glycosylated.

It is found in the secreted. The catalysed reaction is Endohydrolysis of (1-&gt;6)-alpha-D-glucosidic linkages in dextran.. This Talaromyces minioluteus (Filamentous fungus) protein is Dextranase (DEX).